Consider the following 417-residue polypeptide: Gamma-glutamyl phosphate reductase (417 aa).

This sequence belongs to the gamma-glutamyl phosphate reductase family.

The protein resides in the cytoplasm. It catalyses the reaction L-glutamate 5-semialdehyde + phosphate + NADP(+) = L-glutamyl 5-phosphate + NADPH + H(+). It participates in amino-acid biosynthesis; L-proline biosynthesis; L-glutamate 5-semialdehyde from L-glutamate: step 2/2. In terms of biological role, catalyzes the NADPH-dependent reduction of L-glutamate 5-phosphate into L-glutamate 5-semialdehyde and phosphate. The product spontaneously undergoes cyclization to form 1-pyrroline-5-carboxylate. In Shigella boydii serotype 18 (strain CDC 3083-94 / BS512), this protein is Gamma-glutamyl phosphate reductase.